A 388-amino-acid polypeptide reads, in one-letter code: Sporulation-specific mitogen-activated protein kinase SMK1 (388 aa).

The Protein kinase domain occupies 38–337 (YEIIQFLGKG…VEQAISHPFL (300 aa)). ATP is bound by residues 44–52 (LGKGAYGTV) and Lys-69. The Proton acceptor role is filled by Asp-166. A TXY motif is present at residues 207–209 (TNY).

Belongs to the protein kinase superfamily. CMGC Ser/Thr protein kinase family. MAP kinase subfamily. As to quaternary structure, interacts with GSC2. It depends on Mg(2+) as a cofactor. Post-translationally, dually phosphorylated on Thr-207 and Tyr-209, which activates the enzyme.

The catalysed reaction is L-seryl-[protein] + ATP = O-phospho-L-seryl-[protein] + ADP + H(+). It carries out the reaction L-threonyl-[protein] + ATP = O-phospho-L-threonyl-[protein] + ADP + H(+). With respect to regulation, activated by tyrosine and threonine phosphorylation. Its function is as follows. Required for spore wall assembly. Required for proper deposition of the two outer layers of the spore wall, the chitosan and dityrosine layers. Negatively regulates GSC2, an alternate catalytic subunit of the 1,3-beta-glucan synthase (GS). Participates in a developmentally regulated signal transduction pathway that coordinates cytodifferentiation events with the transcriptional program. This chain is Sporulation-specific mitogen-activated protein kinase SMK1 (SMK1), found in Saccharomyces cerevisiae (strain ATCC 204508 / S288c) (Baker's yeast).